Here is an 869-residue protein sequence, read N- to C-terminus: Bifunctional uridylyltransferase/uridylyl-removing enzyme (869 aa).

Positions 1–332 (MTDAPAERPD…QFDGEATPES (332 aa)) are uridylyltransferase. Positions 333 to 691 (LGGGFSLRRG…RRAVPDNDAL (359 aa)) are uridylyl-removing. Residues 450 to 572 (VDQHTLMVLR…VGTRERLDYL (123 aa)) form the HD domain. 2 ACT domains span residues 692–774 (EVFV…RAVP) and 798–869 (RISL…LDPV).

This sequence belongs to the GlnD family. Mg(2+) is required as a cofactor.

The catalysed reaction is [protein-PII]-L-tyrosine + UTP = [protein-PII]-uridylyl-L-tyrosine + diphosphate. The enzyme catalyses [protein-PII]-uridylyl-L-tyrosine + H2O = [protein-PII]-L-tyrosine + UMP + H(+). Uridylyltransferase (UTase) activity is inhibited by glutamine, while glutamine activates uridylyl-removing (UR) activity. Functionally, modifies, by uridylylation and deuridylylation, the PII regulatory proteins (GlnB and homologs), in response to the nitrogen status of the cell that GlnD senses through the glutamine level. Under low glutamine levels, catalyzes the conversion of the PII proteins and UTP to PII-UMP and PPi, while under higher glutamine levels, GlnD hydrolyzes PII-UMP to PII and UMP (deuridylylation). Thus, controls uridylylation state and activity of the PII proteins, and plays an important role in the regulation of nitrogen assimilation and metabolism. The chain is Bifunctional uridylyltransferase/uridylyl-removing enzyme from Xanthomonas oryzae pv. oryzae (strain MAFF 311018).